Consider the following 153-residue polypeptide: Cytochrome c-type biogenesis protein CcmE (153 aa).

Over 1-8 (MTPVQRRR) the chain is Cytoplasmic. Residues 9–29 (LAWVLLALLASGLATALVAMA) form a helical; Signal-anchor for type II membrane protein membrane-spanning segment. The Extracellular segment spans residues 30–153 (LERNIAYLYT…DVPVTAPEVR (124 aa)). Residues His-123 and Tyr-127 each contribute to the heme site.

This sequence belongs to the CcmE/CycJ family.

Its subcellular location is the cell membrane. Heme chaperone required for the biogenesis of c-type cytochromes. Transiently binds heme delivered by CcmC and transfers the heme to apo-cytochromes in a process facilitated by CcmF and CcmH. This is Cytochrome c-type biogenesis protein CcmE from Stenotrophomonas maltophilia (strain K279a).